Reading from the N-terminus, the 111-residue chain is Ribonuclease P protein component (111 aa).

This sequence belongs to the RnpA family. As to quaternary structure, consists of a catalytic RNA component (M1 or rnpB) and a protein subunit.

The enzyme catalyses Endonucleolytic cleavage of RNA, removing 5'-extranucleotides from tRNA precursor.. Its function is as follows. RNaseP catalyzes the removal of the 5'-leader sequence from pre-tRNA to produce the mature 5'-terminus. It can also cleave other RNA substrates such as 4.5S RNA. The protein component plays an auxiliary but essential role in vivo by binding to the 5'-leader sequence and broadening the substrate specificity of the ribozyme. The chain is Ribonuclease P protein component from Clostridium botulinum (strain Okra / Type B1).